The following is a 194-amino-acid chain: ATP-dependent Clp protease proteolytic subunit 1 (194 aa).

Residue Ser98 is the Nucleophile of the active site. Residue His123 is part of the active site.

Belongs to the peptidase S14 family. In terms of assembly, fourteen ClpP subunits assemble into 2 heptameric rings which stack back to back to give a disk-like structure with a central cavity, resembling the structure of eukaryotic proteasomes.

It is found in the cytoplasm. The catalysed reaction is Hydrolysis of proteins to small peptides in the presence of ATP and magnesium. alpha-casein is the usual test substrate. In the absence of ATP, only oligopeptides shorter than five residues are hydrolyzed (such as succinyl-Leu-Tyr-|-NHMec, and Leu-Tyr-Leu-|-Tyr-Trp, in which cleavage of the -Tyr-|-Leu- and -Tyr-|-Trp bonds also occurs).. Functionally, cleaves peptides in various proteins in a process that requires ATP hydrolysis. Has a chymotrypsin-like activity. Plays a major role in the degradation of misfolded proteins. ClpXP1 is involved in the complete degradation of the Site-2 clipped anti-sigma-W factor RsiW. This results in the release of SigW and the transcription activation of the genes under the control of the sigma-W factor. This chain is ATP-dependent Clp protease proteolytic subunit 1, found in Halalkalibacterium halodurans (strain ATCC BAA-125 / DSM 18197 / FERM 7344 / JCM 9153 / C-125) (Bacillus halodurans).